We begin with the raw amino-acid sequence, 162 residues long: Urease subunit beta (162 aa).

Residues 116-162 (WRRSSAAGDAPQELPQVEAAERGRKLDDATDVDTNVGTEEGFEEGRN) are disordered. The segment covering 134 to 143 (AAERGRKLDD) has biased composition (basic and acidic residues).

This sequence belongs to the urease beta subunit family. As to quaternary structure, heterotrimer of UreA (gamma), UreB (beta) and UreC (alpha) subunits. Three heterotrimers associate to form the active enzyme.

It localises to the cytoplasm. The catalysed reaction is urea + 2 H2O + H(+) = hydrogencarbonate + 2 NH4(+). It functions in the pathway nitrogen metabolism; urea degradation; CO(2) and NH(3) from urea (urease route): step 1/1. This chain is Urease subunit beta, found in Corynebacterium glutamicum (strain ATCC 13032 / DSM 20300 / JCM 1318 / BCRC 11384 / CCUG 27702 / LMG 3730 / NBRC 12168 / NCIMB 10025 / NRRL B-2784 / 534).